The following is a 374-amino-acid chain: Biotin synthase (374 aa).

The 228-residue stretch at Asn49–Arg276 folds into the Radical SAM core domain. Cys64, Cys68, and Cys71 together coordinate [4Fe-4S] cluster. Residues Cys108, Cys139, Cys199, and Arg271 each coordinate [2Fe-2S] cluster. Residues Gln344 to Ala374 are disordered.

It belongs to the radical SAM superfamily. Biotin synthase family. As to quaternary structure, homodimer. Requires [4Fe-4S] cluster as cofactor. [2Fe-2S] cluster serves as cofactor.

It carries out the reaction (4R,5S)-dethiobiotin + (sulfur carrier)-SH + 2 reduced [2Fe-2S]-[ferredoxin] + 2 S-adenosyl-L-methionine = (sulfur carrier)-H + biotin + 2 5'-deoxyadenosine + 2 L-methionine + 2 oxidized [2Fe-2S]-[ferredoxin]. The protein operates within cofactor biosynthesis; biotin biosynthesis; biotin from 7,8-diaminononanoate: step 2/2. Its function is as follows. Catalyzes the conversion of dethiobiotin (DTB) to biotin by the insertion of a sulfur atom into dethiobiotin via a radical-based mechanism. The chain is Biotin synthase from Alteromonas mediterranea (strain DSM 17117 / CIP 110805 / LMG 28347 / Deep ecotype).